A 461-amino-acid chain; its full sequence is Phosphomethylpyrimidine synthase (461 aa).

Residues N81, M110, Y140, H176, S196–G198, D237–R240, and E276 contribute to the substrate site. H280 is a Zn(2+) binding site. Residue Y303 coordinates substrate. H344 serves as a coordination point for Zn(2+). [4Fe-4S] cluster-binding residues include C424, C427, and C432.

Belongs to the ThiC family. [4Fe-4S] cluster is required as a cofactor.

The enzyme catalyses 5-amino-1-(5-phospho-beta-D-ribosyl)imidazole + S-adenosyl-L-methionine = 4-amino-2-methyl-5-(phosphooxymethyl)pyrimidine + CO + 5'-deoxyadenosine + formate + L-methionine + 3 H(+). It participates in cofactor biosynthesis; thiamine diphosphate biosynthesis. Functionally, catalyzes the synthesis of the hydroxymethylpyrimidine phosphate (HMP-P) moiety of thiamine from aminoimidazole ribotide (AIR) in a radical S-adenosyl-L-methionine (SAM)-dependent reaction. The protein is Phosphomethylpyrimidine synthase of Thermosynechococcus vestitus (strain NIES-2133 / IAM M-273 / BP-1).